The sequence spans 400 residues: Exodeoxyribonuclease 7 large subunit (400 aa).

The protein belongs to the XseA family. Heterooligomer composed of large and small subunits.

The protein resides in the cytoplasm. The catalysed reaction is Exonucleolytic cleavage in either 5'- to 3'- or 3'- to 5'-direction to yield nucleoside 5'-phosphates.. Functionally, bidirectionally degrades single-stranded DNA into large acid-insoluble oligonucleotides, which are then degraded further into small acid-soluble oligonucleotides. This is Exodeoxyribonuclease 7 large subunit from Clostridium novyi (strain NT).